We begin with the raw amino-acid sequence, 293 residues long: Elongation factor Ts (293 aa).

Positions T80–V83 are involved in Mg(2+) ion dislocation from EF-Tu.

The protein belongs to the EF-Ts family.

It localises to the cytoplasm. Functionally, associates with the EF-Tu.GDP complex and induces the exchange of GDP to GTP. It remains bound to the aminoacyl-tRNA.EF-Tu.GTP complex up to the GTP hydrolysis stage on the ribosome. The sequence is that of Elongation factor Ts from Paraburkholderia phymatum (strain DSM 17167 / CIP 108236 / LMG 21445 / STM815) (Burkholderia phymatum).